We begin with the raw amino-acid sequence, 351 residues long: Ribonucleoside-diphosphate reductase subunit M2 B (351 aa).

The tract at residues M1–E31 is disordered. Positions 100, 131, and 134 each coordinate Fe cation. Y138 is a catalytic residue. Residues E194, E228, and H231 each coordinate Fe cation.

It belongs to the ribonucleoside diphosphate reductase small chain family. Heterotetramer with large (RRM1) subunit. Interacts with p53/TP53. Interacts with RRM1 in response to DNA damage. The cofactor is Fe cation.

Its subcellular location is the cytoplasm. It is found in the nucleus. The enzyme catalyses a 2'-deoxyribonucleoside 5'-diphosphate + [thioredoxin]-disulfide + H2O = a ribonucleoside 5'-diphosphate + [thioredoxin]-dithiol. Its function is as follows. Plays a pivotal role in cell survival by repairing damaged DNA in a p53/TP53-dependent manner. Supplies deoxyribonucleotides for DNA repair in cells arrested at G1 or G2. Contains an iron-tyrosyl free radical center required for catalysis. Forms an active ribonucleotide reductase (RNR) complex with RRM1 which is expressed both in resting and proliferating cells in response to DNA damage. The sequence is that of Ribonucleoside-diphosphate reductase subunit M2 B (RRM2B) from Pongo abelii (Sumatran orangutan).